A 66-amino-acid polypeptide reads, in one-letter code: Large ribosomal subunit protein bL35 (66 aa).

This sequence belongs to the bacterial ribosomal protein bL35 family.

This Rhodopseudomonas palustris (strain BisB18) protein is Large ribosomal subunit protein bL35.